The chain runs to 426 residues: Phosphomethylpyrimidine synthase (426 aa).

Residues N65, M94, Y123, H162, 184–186 (SRG), 225–228 (DGMR), and E264 each bind substrate. H268 contributes to the Zn(2+) binding site. Residue Y291 coordinates substrate. H332 serves as a coordination point for Zn(2+). C408, C411, and C415 together coordinate [4Fe-4S] cluster.

The protein belongs to the ThiC family. [4Fe-4S] cluster serves as cofactor.

It carries out the reaction 5-amino-1-(5-phospho-beta-D-ribosyl)imidazole + S-adenosyl-L-methionine = 4-amino-2-methyl-5-(phosphooxymethyl)pyrimidine + CO + 5'-deoxyadenosine + formate + L-methionine + 3 H(+). It functions in the pathway cofactor biosynthesis; thiamine diphosphate biosynthesis. In terms of biological role, catalyzes the synthesis of the hydroxymethylpyrimidine phosphate (HMP-P) moiety of thiamine from aminoimidazole ribotide (AIR) in a radical S-adenosyl-L-methionine (SAM)-dependent reaction. In Methanococcus aeolicus (strain ATCC BAA-1280 / DSM 17508 / OCM 812 / Nankai-3), this protein is Phosphomethylpyrimidine synthase.